The chain runs to 453 residues: Trigger factor (453 aa).

Residues 171-256 (GDRVTISFKG…ASLIEAPQDI (86 aa)) form the PPIase FKBP-type domain.

Belongs to the FKBP-type PPIase family. Tig subfamily.

It is found in the cytoplasm. The enzyme catalyses [protein]-peptidylproline (omega=180) = [protein]-peptidylproline (omega=0). In terms of biological role, involved in protein export. Acts as a chaperone by maintaining the newly synthesized protein in an open conformation. Functions as a peptidyl-prolyl cis-trans isomerase. In Nitrobacter hamburgensis (strain DSM 10229 / NCIMB 13809 / X14), this protein is Trigger factor.